A 526-amino-acid chain; its full sequence is Importin subunit alpha-1a (526 aa).

One can recognise an IBB domain in the interval 1-58; that stretch reads MSLRPSERVEVRRNRYKVAVDAEEGRRRREDNMVEIRKSRREESLLKKRREGLQAQAP. 8 ARM repeats span residues 105–145, 148–187, 190–230, 232–271, 274–313, 316–356, 359–398, and 402–441; these read SPPI…NIAS, SENTKVVIDHGAVPIFVKLLGSSSDDVREQAVWALGNVAG, PKCR…NFCR, KPQPSFEQTRPALPALARLIHSNDEEVLTDACWALSYLSD, NDKIQAVIEAGVCPRLVELLLHPSPSVLIPALRTVGNIVT, DAQT…NITA, KDQIQAVINAGIIGPLVNLLQTAEFDIKKEAAWAISNATS, and HDQIKYLVSEGCIKPLCDLLICPDIRIVTVCLEGLENILK.

Belongs to the importin alpha family. As to quaternary structure, forms a complex with importin subunit beta-1. The whole complex, most stable and composed of importin alpha, importin beta and NLS substrate, is referred to as PTAC or pore targeting complex. Interacts with mungbean yellow mosaic virus capsid protein. In terms of tissue distribution, highly expressed in callus, followed by root and etiolated leaf. Low expression in green leaf.

It is found in the cytoplasm. The protein resides in the perinuclear region. Functionally, functions in nuclear protein import. Binds specifically and directly to substrates containing either a simple or bipartite NLS motif. Promotes docking of import substrates to the nuclear envelope. The sequence is that of Importin subunit alpha-1a from Oryza sativa subsp. japonica (Rice).